The primary structure comprises 162 residues: Nucleotide-binding protein SAV_4896 (162 aa).

The protein belongs to the YajQ family.

Functionally, nucleotide-binding protein. This is Nucleotide-binding protein SAV_4896 from Streptomyces avermitilis (strain ATCC 31267 / DSM 46492 / JCM 5070 / NBRC 14893 / NCIMB 12804 / NRRL 8165 / MA-4680).